Reading from the N-terminus, the 435-residue chain is Origin recognition complex subunit 5 (435 aa).

An ATP-binding site is contributed by 37–44; it reads GHTASGKT.

This sequence belongs to the ORC5 family. In terms of assembly, component of ORC, a complex composed of at least 6 subunits: ORC1, ORC2, ORC3, ORC4, ORC5 and ORC6. ORC is regulated in a cell-cycle dependent manner. It is sequentially assembled at the exit from anaphase of mitosis and disassembled as cells enter S phase. In terms of processing, multi-mono-ubiquitinated by OBI1; ubiquitination is important for efficient DNA replication origin site activation. Ubiquitination levels are low in mitotic and early G1-phAse cells and are induced in late G1-/early S-phase, peaking in S-phase and decrease toward the end of the cell cycle. As to expression, abundant in spleen, ovary, prostate, testis, and colon mucosa.

Its subcellular location is the nucleus. The protein resides in the chromosome. Component of the origin recognition complex (ORC) that binds origins of replication. DNA-binding is ATP-dependent. The specific DNA sequences that define origins of replication have not been identified yet. ORC is required to assemble the pre-replication complex necessary to initiate DNA replication. In Homo sapiens (Human), this protein is Origin recognition complex subunit 5 (ORC5).